The sequence spans 221 residues: uncharacterized protein (221 aa).

This is an uncharacterized protein from Treponema pallidum (strain Nichols).